The primary structure comprises 564 residues: Threonine--tRNA ligase (564 aa).

Residues 167–464 (DHRAIGKRLE…LLEKTHGNLP (298 aa)) form a catalytic region. Zn(2+) contacts are provided by Cys260, His311, and His441.

Belongs to the class-II aminoacyl-tRNA synthetase family. As to quaternary structure, homodimer. Requires Zn(2+) as cofactor.

The protein localises to the cytoplasm. The enzyme catalyses tRNA(Thr) + L-threonine + ATP = L-threonyl-tRNA(Thr) + AMP + diphosphate + H(+). Functionally, catalyzes the attachment of threonine to tRNA(Thr) in a two-step reaction: L-threonine is first activated by ATP to form Thr-AMP and then transferred to the acceptor end of tRNA(Thr). Also edits incorrectly charged L-seryl-tRNA(Thr). This Mycoplasma pneumoniae (strain ATCC 29342 / M129 / Subtype 1) (Mycoplasmoides pneumoniae) protein is Threonine--tRNA ligase.